The chain runs to 326 residues: Protoheme IX farnesyltransferase (326 aa).

8 helical membrane-spanning segments follow: residues 35-55, 60-80, 106-126, 129-149, 157-177, 185-205, 238-258, and 289-309; these read LIPL…GWPL, LICT…LNCL, TAFI…VSGV, LAAG…TALL, IVVG…AATG, WLFA…ALLL, VLLS…YGLM, and WSIL…SALA.

Belongs to the UbiA prenyltransferase family. Protoheme IX farnesyltransferase subfamily.

It localises to the cell inner membrane. The catalysed reaction is heme b + (2E,6E)-farnesyl diphosphate + H2O = Fe(II)-heme o + diphosphate. It functions in the pathway porphyrin-containing compound metabolism; heme O biosynthesis; heme O from protoheme: step 1/1. Functionally, converts heme B (protoheme IX) to heme O by substitution of the vinyl group on carbon 2 of heme B porphyrin ring with a hydroxyethyl farnesyl side group. This chain is Protoheme IX farnesyltransferase, found in Synechococcus sp. (strain CC9902).